The sequence spans 325 residues: Elongation factor P--(R)-beta-lysine ligase (325 aa).

76–78 (SPE) is a binding site for substrate. ATP-binding positions include 100–102 (RNE) and N109. Y118 contributes to the substrate binding site. 244–245 (EL) serves as a coordination point for ATP. Residue E251 coordinates substrate. ATP is bound at residue G300.

This sequence belongs to the class-II aminoacyl-tRNA synthetase family. EpmA subfamily. As to quaternary structure, homodimer.

The enzyme catalyses D-beta-lysine + L-lysyl-[protein] + ATP = N(6)-((3R)-3,6-diaminohexanoyl)-L-lysyl-[protein] + AMP + diphosphate + H(+). In terms of biological role, with EpmB is involved in the beta-lysylation step of the post-translational modification of translation elongation factor P (EF-P). Catalyzes the ATP-dependent activation of (R)-beta-lysine produced by EpmB, forming a lysyl-adenylate, from which the beta-lysyl moiety is then transferred to the epsilon-amino group of a conserved specific lysine residue in EF-P. The polypeptide is Elongation factor P--(R)-beta-lysine ligase (Proteus mirabilis (strain HI4320)).